Here is a 439-residue protein sequence, read N- to C-terminus: Ribosomal protein uS12 methylthiotransferase RimO (439 aa).

Residues 3–118 (KKFYITTLGC…AGKILREKFP (116 aa)) form the MTTase N-terminal domain. 6 residues coordinate [4Fe-4S] cluster: cysteine 12, cysteine 48, cysteine 81, cysteine 157, cysteine 161, and cysteine 164. The region spanning 143-370 (NYSKPYAYVK…RDVHLAILEE (228 aa)) is the Radical SAM core domain. The TRAM domain occupies 373–438 (ESRIGQTYDA…EYDMNGTWIS (66 aa)).

Belongs to the methylthiotransferase family. RimO subfamily. Requires [4Fe-4S] cluster as cofactor.

Its subcellular location is the cytoplasm. The catalysed reaction is L-aspartate(89)-[ribosomal protein uS12]-hydrogen + (sulfur carrier)-SH + AH2 + 2 S-adenosyl-L-methionine = 3-methylsulfanyl-L-aspartate(89)-[ribosomal protein uS12]-hydrogen + (sulfur carrier)-H + 5'-deoxyadenosine + L-methionine + A + S-adenosyl-L-homocysteine + 2 H(+). Catalyzes the methylthiolation of an aspartic acid residue of ribosomal protein uS12. In Leptospira borgpetersenii serovar Hardjo-bovis (strain L550), this protein is Ribosomal protein uS12 methylthiotransferase RimO.